A 759-amino-acid polypeptide reads, in one-letter code: Multifunctional tryptophan biosynthesis protein (759 aa).

A Glutamine amidotransferase type-1 domain is found at 27–223 (PIVMIDNYDS…LNLTAGTWEE (197 aa)). 80–82 (GPG) is a binding site for L-glutamine. Cys108 (nucleophile; for GATase activity) is an active-site residue. L-glutamine is bound by residues Gln112 and 158–159 (SL). Residues His197 and Glu199 each act as for GATase activity in the active site. An indole-3-glycerol phosphate synthase region spans residues 257 to 519 (ILEKIHAQRL…DPAAFARELL (263 aa)). The segment at 536-759 (LVKVCGTRSL…KAFINAVKEL (224 aa)) is N-(5'-phosphoribosyl)anthranilate isomerase.

It carries out the reaction N-(5-phospho-beta-D-ribosyl)anthranilate = 1-(2-carboxyphenylamino)-1-deoxy-D-ribulose 5-phosphate. The catalysed reaction is 1-(2-carboxyphenylamino)-1-deoxy-D-ribulose 5-phosphate + H(+) = (1S,2R)-1-C-(indol-3-yl)glycerol 3-phosphate + CO2 + H2O. It catalyses the reaction chorismate + L-glutamine = anthranilate + pyruvate + L-glutamate + H(+). It participates in amino-acid biosynthesis; L-tryptophan biosynthesis; L-tryptophan from chorismate: step 1/5. It functions in the pathway amino-acid biosynthesis; L-tryptophan biosynthesis; L-tryptophan from chorismate: step 3/5. The protein operates within amino-acid biosynthesis; L-tryptophan biosynthesis; L-tryptophan from chorismate: step 4/5. Functionally, trifunctional enzyme bearing the Gln amidotransferase (GATase) domain of anthranilate synthase, indole-glycerolphosphate synthase, and phosphoribosylanthranilate isomerase activities. The polypeptide is Multifunctional tryptophan biosynthesis protein (trp1) (Schizosaccharomyces pombe (strain 972 / ATCC 24843) (Fission yeast)).